A 209-amino-acid polypeptide reads, in one-letter code: Probable glutathione peroxidase 8-B (209 aa).

The helical transmembrane segment at 18–40 (VFLVFFSMVLCTGILCVLQLKFL) threads the bilayer. The active site involves cysteine 79.

The protein belongs to the glutathione peroxidase family.

The protein localises to the membrane. The enzyme catalyses 2 glutathione + H2O2 = glutathione disulfide + 2 H2O. The chain is Probable glutathione peroxidase 8-B (gpx8-b) from Xenopus laevis (African clawed frog).